Consider the following 373-residue polypeptide: tRNA-specific 2-thiouridylase MnmA (373 aa).

Residues glycine 12 to serine 19 and methionine 38 contribute to the ATP site. The interval asparagine 98–aspartate 100 is interaction with target base in tRNA. The Nucleophile role is filled by cysteine 103. A disulfide bridge links cysteine 103 with cysteine 200. Glycine 127 contributes to the ATP binding site. The segment at lysine 150–glutamine 152 is interaction with tRNA. Cysteine 200 (cysteine persulfide intermediate) is an active-site residue. The interval arginine 312–tyrosine 313 is interaction with tRNA.

Belongs to the MnmA/TRMU family.

The protein resides in the cytoplasm. It carries out the reaction S-sulfanyl-L-cysteinyl-[protein] + uridine(34) in tRNA + AH2 + ATP = 2-thiouridine(34) in tRNA + L-cysteinyl-[protein] + A + AMP + diphosphate + H(+). Its function is as follows. Catalyzes the 2-thiolation of uridine at the wobble position (U34) of tRNA, leading to the formation of s(2)U34. This is tRNA-specific 2-thiouridylase MnmA from Streptococcus pyogenes serotype M49 (strain NZ131).